A 418-amino-acid polypeptide reads, in one-letter code: Light-independent protochlorophyllide reductase subunit N (418 aa).

[4Fe-4S] cluster contacts are provided by cysteine 17, cysteine 42, and cysteine 103.

Belongs to the BchN/ChlN family. Protochlorophyllide reductase is composed of three subunits; ChlL, ChlN and ChlB. Forms a heterotetramer of two ChlB and two ChlN subunits. [4Fe-4S] cluster is required as a cofactor.

The enzyme catalyses chlorophyllide a + oxidized 2[4Fe-4S]-[ferredoxin] + 2 ADP + 2 phosphate = protochlorophyllide a + reduced 2[4Fe-4S]-[ferredoxin] + 2 ATP + 2 H2O. Its pathway is porphyrin-containing compound metabolism; chlorophyll biosynthesis (light-independent). Functionally, component of the dark-operative protochlorophyllide reductase (DPOR) that uses Mg-ATP and reduced ferredoxin to reduce ring D of protochlorophyllide (Pchlide) to form chlorophyllide a (Chlide). This reaction is light-independent. The NB-protein (ChlN-ChlB) is the catalytic component of the complex. In Prochlorococcus marinus (strain MIT 9515), this protein is Light-independent protochlorophyllide reductase subunit N.